A 620-amino-acid chain; its full sequence is Glutathione-regulated potassium-efflux system protein KefC (620 aa).

The next 12 membrane-spanning stretches (helical) occupy residues 4–24 (HTLLQALIYLGSAALIVPIAV), 26–46 (LGLGSVLGYLIAGCIIGPWGL), 54–74 (SILHFAEIGVVLMLFVIGLEL), 90–110 (GALQMVVCGGLIGLFCMFLGL), 114–134 (VAELIGMTLALSSTAIAMQAM), 149–169 (FAVLLFQDIAAIPLVAMIPLL), 178–198 (LGAFALSALKVAGALALVVLL), 218–238 (VFSAVALFLVFGFGLLLEEVG), 270–290 (GLLLGLFFIGVGMSIDFGTLV), 294–314 (LRILLLLAGFLAIKIVMLWLV), 327–347 (WFAVLLGQGSEFAFVVFGAAQ), and 359–379 (ALTLAVALSMAATPIFLMLLT). One can recognise an RCK N-terminal domain in the interval 399-518 (QPRVIVAGFG…AGVAMPERET (120 aa)). The segment at 599–620 (QGTAEGKHSGEAADEPEVKPSI) is disordered.

This sequence belongs to the monovalent cation:proton antiporter 2 (CPA2) transporter (TC 2.A.37) family. KefC subfamily. Homodimer. Interacts with the regulatory subunit KefF.

The protein localises to the cell inner membrane. Its function is as follows. Pore-forming subunit of a potassium efflux system that confers protection against electrophiles. Catalyzes K(+)/H(+) antiport. The protein is Glutathione-regulated potassium-efflux system protein KefC of Salmonella heidelberg (strain SL476).